Reading from the N-terminus, the 243-residue chain is Terpene cyclase dpasB (243 aa).

7 helical membrane-spanning segments follow: residues 16-36, 50-70, 79-99, 112-132, 141-161, 172-189, and 207-227; these read VVWV…SNYI, MALM…FIYP, IHTL…RYGA, LPVI…AFAE, AVSG…QLLC, LWLA…PNML, and IWFL…LWYV.

Belongs to the paxB family.

Its subcellular location is the membrane. Its pathway is secondary metabolite biosynthesis; terpenoid biosynthesis. Terpene cyclase; part of the gene cluster that mediates the biosynthesis of the diterpenoid pyrones subglutinols A and B. The first step of the pathway is the synthesis of the alpha-pyrone moiety by the polyketide synthase dpasA via condensation of one acetyl-CoA starter unit with 3 malonyl-CoA units and 2 methylations. The alpha-pyrone is then combined with geranylgeranyl pyrophosphate (GGPP) formed by the GGPP synthase dpasD through the action of the prenyltransferase dpasC to yield a linear alpha-pyrone diterpenoid. Subsequent steps in the diterpenoid pyrone biosynthetic pathway involve the decalin core formation, which is initiated by the epoxidation of the C10-C11 olefin by the FAD-dependent oxidoreductase dpasE, and is followed by a cyclization cascade catalyzed by the terpene cyclase dpasB. The FAD-linked oxidoreductase dpasF is then involved in tetrahydrofuran (THF) ring formation at the C5 unit to complete the formation of subglutinols A and B. DpasF possesses also an additional catalytic ability of multi-step oxidations to generate a new DDP analog with an enone system at the C5 named FDDP A. This Apiospora sacchari (Arthrinium sacchari) protein is Terpene cyclase dpasB.